A 310-amino-acid chain; its full sequence is Olfactory receptor 5AR1 (310 aa).

Topologically, residues 1-28 (MDKENSSMVTEFIFMGITQDPQMEIIFF) are extracellular. An N-linked (GlcNAc...) asparagine glycan is attached at Asn5. The helical transmembrane segment at 29-49 (VVFLIVYLVNVVGNIGMIILI) threads the bilayer. Residues 50–58 (TTDTQLHTP) lie on the Cytoplasmic side of the membrane. A helical membrane pass occupies residues 59 to 79 (MYFFLCNLSFVDLGYSSAIAP). Over 80-100 (RMLADFLTNHKVISFSSCATQ) the chain is Extracellular. Cysteines 97 and 189 form a disulfide. The chain crosses the membrane as a helical span at residues 101-120 (FAFFVGFVDAECYVLAAMAY). At 121-139 (GRFVAICRPLHYSTFMSKQ) the chain is on the cytoplasmic side. The helical transmembrane segment at 140–160 (VCLALMLGSYLAGLVSLVAHT) threads the bilayer. Residues 161 to 205 (TLTFSLSYCGSNIINHFFCEIPPLLALSCSDTYISEILLFSLCGF) lie on the Extracellular side of the membrane. Residues 206–226 (IEFSTILIIFISYTFILVAII) form a helical membrane-spanning segment. Topologically, residues 227–239 (RMRSAEGRLKAFS) are cytoplasmic. The helical transmembrane segment at 240–260 (TCGSHLTGITLFYGTVMFMYL) threads the bilayer. The Extracellular segment spans residues 261–271 (RPTSSYSLDQD). Residues 272–292 (KWASVFYTVIIPMLNPLIYSL) form a helical membrane-spanning segment. The Cytoplasmic portion of the chain corresponds to 293 to 310 (RNKDVKAAFKKLIGKKSQ).

Belongs to the G-protein coupled receptor 1 family.

The protein localises to the cell membrane. Functionally, odorant receptor. This chain is Olfactory receptor 5AR1, found in Homo sapiens (Human).